The primary structure comprises 106 residues: Urease subunit beta (106 aa).

The protein belongs to the urease beta subunit family. Heterotrimer of UreA (gamma), UreB (beta) and UreC (alpha) subunits. Three heterotrimers associate to form the active enzyme.

The protein localises to the cytoplasm. It catalyses the reaction urea + 2 H2O + H(+) = hydrogencarbonate + 2 NH4(+). It functions in the pathway nitrogen metabolism; urea degradation; CO(2) and NH(3) from urea (urease route): step 1/1. This chain is Urease subunit beta, found in Prochlorococcus marinus subsp. pastoris (strain CCMP1986 / NIES-2087 / MED4).